A 489-amino-acid chain; its full sequence is Cobyric acid synthase (489 aa).

In terms of domain architecture, GATase cobBQ-type spans 254–442; the sequence is ARVIAVPVLP…VHGLFADDRQ (189 aa). The active-site Nucleophile is Cys-336. Residue His-434 is part of the active site.

The protein belongs to the CobB/CobQ family. CobQ subfamily.

The protein operates within cofactor biosynthesis; adenosylcobalamin biosynthesis. Catalyzes amidations at positions B, D, E, and G on adenosylcobyrinic A,C-diamide. NH(2) groups are provided by glutamine, and one molecule of ATP is hydrogenolyzed for each amidation. The sequence is that of Cobyric acid synthase from Methylobacterium nodulans (strain LMG 21967 / CNCM I-2342 / ORS 2060).